A 347-amino-acid polypeptide reads, in one-letter code: Holliday junction branch migration complex subunit RuvB (347 aa).

The segment at 1–180 (MTSRVVSPEQ…FGIPCRMNFY (180 aa)) is large ATPase domain (RuvB-L). Residues Leu-19, Arg-20, Gly-61, Lys-64, Thr-65, Thr-66, 127 to 129 (EDF), Arg-170, Tyr-180, and Arg-217 each bind ATP. Thr-65 contacts Mg(2+). The interval 181–251 (EPAELEAIVS…VADAALNRLE (71 aa)) is small ATPAse domain (RuvB-S). The interval 254-347 (RIGLDAMDRR…LLTRMDEEGE (94 aa)) is head domain (RuvB-H). DNA is bound by residues Arg-290, Arg-309, and Arg-314.

This sequence belongs to the RuvB family. As to quaternary structure, homohexamer. Forms an RuvA(8)-RuvB(12)-Holliday junction (HJ) complex. HJ DNA is sandwiched between 2 RuvA tetramers; dsDNA enters through RuvA and exits via RuvB. An RuvB hexamer assembles on each DNA strand where it exits the tetramer. Each RuvB hexamer is contacted by two RuvA subunits (via domain III) on 2 adjacent RuvB subunits; this complex drives branch migration. In the full resolvosome a probable DNA-RuvA(4)-RuvB(12)-RuvC(2) complex forms which resolves the HJ.

The protein localises to the cytoplasm. The catalysed reaction is ATP + H2O = ADP + phosphate + H(+). In terms of biological role, the RuvA-RuvB-RuvC complex processes Holliday junction (HJ) DNA during genetic recombination and DNA repair, while the RuvA-RuvB complex plays an important role in the rescue of blocked DNA replication forks via replication fork reversal (RFR). RuvA specifically binds to HJ cruciform DNA, conferring on it an open structure. The RuvB hexamer acts as an ATP-dependent pump, pulling dsDNA into and through the RuvAB complex. RuvB forms 2 homohexamers on either side of HJ DNA bound by 1 or 2 RuvA tetramers; 4 subunits per hexamer contact DNA at a time. Coordinated motions by a converter formed by DNA-disengaged RuvB subunits stimulates ATP hydrolysis and nucleotide exchange. Immobilization of the converter enables RuvB to convert the ATP-contained energy into a lever motion, pulling 2 nucleotides of DNA out of the RuvA tetramer per ATP hydrolyzed, thus driving DNA branch migration. The RuvB motors rotate together with the DNA substrate, which together with the progressing nucleotide cycle form the mechanistic basis for DNA recombination by continuous HJ branch migration. Branch migration allows RuvC to scan DNA until it finds its consensus sequence, where it cleaves and resolves cruciform DNA. This chain is Holliday junction branch migration complex subunit RuvB, found in Paramagnetospirillum magneticum (strain ATCC 700264 / AMB-1) (Magnetospirillum magneticum).